The sequence spans 351 residues: Anthranilate phosphoribosyltransferase (351 aa).

Residues glycine 92, 95-96 (GD), threonine 100, 102-105 (NIST), 120-128 (KHGNRAASS), and serine 132 contribute to the 5-phospho-alpha-D-ribose 1-diphosphate site. Glycine 92 is an anthranilate binding site. Serine 104 lines the Mg(2+) pocket. Asparagine 123 lines the anthranilate pocket. An anthranilate-binding site is contributed by arginine 178. The Mg(2+) site is built by aspartate 236 and glutamate 237.

This sequence belongs to the anthranilate phosphoribosyltransferase family. Homodimer. It depends on Mg(2+) as a cofactor.

The enzyme catalyses N-(5-phospho-beta-D-ribosyl)anthranilate + diphosphate = 5-phospho-alpha-D-ribose 1-diphosphate + anthranilate. The protein operates within amino-acid biosynthesis; L-tryptophan biosynthesis; L-tryptophan from chorismate: step 2/5. Functionally, catalyzes the transfer of the phosphoribosyl group of 5-phosphorylribose-1-pyrophosphate (PRPP) to anthranilate to yield N-(5'-phosphoribosyl)-anthranilate (PRA). The sequence is that of Anthranilate phosphoribosyltransferase from Deinococcus geothermalis (strain DSM 11300 / CIP 105573 / AG-3a).